Consider the following 356-residue polypeptide: UDP-N-acetylglucosamine--N-acetylmuramyl-(pentapeptide) pyrophosphoryl-undecaprenol N-acetylglucosamine transferase (356 aa).

Residues 12 to 14, N124, R163, S188, I242, 261 to 266, and Q287 each bind UDP-N-acetyl-alpha-D-glucosamine; these read TGG and ALTVSE.

It belongs to the glycosyltransferase 28 family. MurG subfamily.

Its subcellular location is the cell inner membrane. It catalyses the reaction di-trans,octa-cis-undecaprenyl diphospho-N-acetyl-alpha-D-muramoyl-L-alanyl-D-glutamyl-meso-2,6-diaminopimeloyl-D-alanyl-D-alanine + UDP-N-acetyl-alpha-D-glucosamine = di-trans,octa-cis-undecaprenyl diphospho-[N-acetyl-alpha-D-glucosaminyl-(1-&gt;4)]-N-acetyl-alpha-D-muramoyl-L-alanyl-D-glutamyl-meso-2,6-diaminopimeloyl-D-alanyl-D-alanine + UDP + H(+). Its pathway is cell wall biogenesis; peptidoglycan biosynthesis. Cell wall formation. Catalyzes the transfer of a GlcNAc subunit on undecaprenyl-pyrophosphoryl-MurNAc-pentapeptide (lipid intermediate I) to form undecaprenyl-pyrophosphoryl-MurNAc-(pentapeptide)GlcNAc (lipid intermediate II). The sequence is that of UDP-N-acetylglucosamine--N-acetylmuramyl-(pentapeptide) pyrophosphoryl-undecaprenol N-acetylglucosamine transferase from Pseudomonas fluorescens (strain SBW25).